The primary structure comprises 494 residues: Integrin beta-like protein 1 (494 aa).

Positions 1–23 (MRPPGFRNFLLLASSLLFAGLSA) are cleaved as a signal peptide. 40 disulfide bridges follow: Cys40-Cys71, Cys51-Cys69, Cys63-Cys74, Cys76-Cys89, Cys91-Cys112, Cys96-Cys110, Cys104-Cys115, Cys117-Cys126, Cys132-Cys159, Cys143-Cys157, Cys151-Cys162, Cys164-Cys178, Cys180-Cys202, Cys185-Cys200, Cys194-Cys205, Cys207-Cys216, Cys220-Cys247, Cys231-Cys245, Cys239-Cys250, Cys252-Cys269, Cys271-Cys296, Cys276-Cys294, Cys288-Cys299, Cys301-Cys310, Cys316-Cys343, Cys327-Cys341, Cys335-Cys346, Cys348-Cys361, Cys363-Cys384, Cys368-Cys382, Cys376-Cys387, Cys389-Cys398, Cys404-Cys431, Cys415-Cys429, Cys423-Cys434, Cys436-Cys448, Cys450-Cys471, Cys455-Cys469, Cys463-Cys474, and Cys476-Cys485. 10 I-EGF domains span residues 40–90 (CRLS…PLCE), 91–127 (CHEWVCETYDGSTCAGHGKCDCGKCKCDQGWYGDACQ), 132–179 (CDLT…KFCE), 180–217 (CDDRECIDDETEEICGGHGKCYCGNCYCKAGWHGDKCE), 220–270 (CDIT…DTCE), 271–311 (CDER…KKCE), 316–362 (CTLS…KTCE), 363–399 (CDDRRCEDLDGVVCGGHGTCSCGRCVCERGWFGKLCQ), 404–449 (CNMT…EFCD), and 450–486 (CDDRDCDKHDGLICTGNGICSCGNCECWDGWNGNACE). One copy of the I repeat lies at 51–95 (CRAPGQPPGAALCHGRGRCDCGVCICHVTEPGMFFGPLCECHEWV). Residues 51–494 (CRAPGQPPGA…CEIWLGSEYP (444 aa)) are cysteine-rich tandem repeats. The stretch at 96–142 (CETYDGSTCAGHGKCDCGKCKCDQGWYGDACQYPTNCDLTKKKSNQM) is one II repeat. One copy of the III repeat lies at 143–184 (CKNSQDIICSNAGTCHCGRCKCDNSDGSGLVYGKFCECDDRE). Residues 185–230 (CIDDETEEICGGHGKCYCGNCYCKAGWHGDKCEFQCDITPWESKRR) form an IV repeat. One copy of the V repeat lies at 231–275 (CTSPDGKICSNRGTCVCGECTCHDVDPTGDWGDIHGDTCECDERD). One copy of the VI repeat lies at 276–326 (CRAVYDRYSDDFCSGHGQCNCGRCDCKAGWYGKKCEHPQSCTLSAEESIRK). A VII repeat occupies 327 to 367 (CQGSSDLPCSGRGKCECGKCTCYPPGDRRVYGKTCECDDRR). The VIII repeat unit spans residues 368–414 (CEDLDGVVCGGHGTCSCGRCVCERGWFGKLCQHPRKCNMTEEQSKNL). An N-linked (GlcNAc...) asparagine glycan is attached at Asn405. One copy of the IX repeat lies at 415-454 (CESADGILCSGKGSCHCGKCICSAEEWYISGEFCDCDDRD). A X repeat occupies 455–494 (CDKHDGLICTGNGICSCGNCECWDGWNGNACEIWLGSEYP).

In terms of tissue distribution, widely expressed in many tissues, but readily detectable only in aorta.

Its subcellular location is the secreted. The polypeptide is Integrin beta-like protein 1 (ITGBL1) (Homo sapiens (Human)).